An 883-amino-acid polypeptide reads, in one-letter code: Serine/threonine-protein kinase greatwall (883 aa).

Met1 is modified (N-acetylmethionine). The interval 1–23 (MEPTMGGEMESGGGAATGECVNR) is disordered. A Protein kinase domain is found at 35–839 (FTIVKPISRG…MKELKHHPLF (805 aa)). ATP-binding positions include 41–49 (ISRGAFGKV) and Lys62. Asp156 serves as the catalytic Proton acceptor. Residues Thr209 and Thr224 each carry the phosphothreonine modification. Ser295 carries the post-translational modification Phosphoserine. A disordered region spans residues 298 to 317 (RLATSSTSSPSHTFISSMES). The segment covering 301 to 314 (TSSTSSPSHTFISS) has biased composition (low complexity). Phosphoserine is present on residues Ser373 and Ser456. Positions 511–530 (ENVGSSFTDKHQTPEKSPVP) are disordered. Residue Thr523 is modified to Phosphothreonine. Phosphoserine occurs at positions 556 and 560. Residues 569–597 (IHMDSDSSFPGISIMESPLGGQSLDPDKN) form a disordered region. Ser635, Ser661, and Ser672 each carry phosphoserine. The segment at 706–737 (RSDMPYQQTPNQVKSETPYRTPKSVRRGAAPV) is disordered. A compositionally biased stretch (polar residues) spans 710 to 720 (PYQQTPNQVKS). Phosphothreonine is present on Thr726. Ser729 bears the Phosphoserine mark. The residue at position 745 (Thr745) is a Phosphothreonine; by CDK1. The region spanning 840–883 (SGVDWENLQHQKMPFIPQPDDETDTSYFEARNNAQHLTVSGFSL) is the AGC-kinase C-terminal domain. Residues Ser879 and Ser882 each carry the phosphoserine modification.

It belongs to the protein kinase superfamily. AGC Ser/Thr protein kinase family. Post-translationally, phosphorylation at Thr-745 by CDK1 during M phase activates its kinase activity. Maximum phosphorylation occurs in prometaphase.

The protein localises to the cytoplasm. Its subcellular location is the cytoskeleton. The protein resides in the microtubule organizing center. It is found in the centrosome. It localises to the nucleus. The catalysed reaction is L-seryl-[protein] + ATP = O-phospho-L-seryl-[protein] + ADP + H(+). It catalyses the reaction L-threonyl-[protein] + ATP = O-phospho-L-threonyl-[protein] + ADP + H(+). Functionally, serine/threonine kinase that plays a key role in M phase by acting as a regulator of mitosis entry and maintenance. Acts by promoting the inactivation of protein phosphatase 2A (PP2A) during M phase: does not directly inhibit PP2A but acts by mediating phosphorylation and subsequent activation of ARPP19 and ENSA at 'Ser-62' and 'Ser-67', respectively. ARPP19 and ENSA are phosphatase inhibitors that specifically inhibit the PPP2R2D (PR55-delta) subunit of PP2A. Inactivation of PP2A during M phase is essential to keep cyclin-B1-CDK1 activity high. Following DNA damage, it is also involved in checkpoint recovery by being inhibited. In Bos taurus (Bovine), this protein is Serine/threonine-protein kinase greatwall (MASTL).